Here is a 526-residue protein sequence, read N- to C-terminus: Keratin, type I cytoskeletal 10 (526 aa).

Residues 1-15 (MSVRYSSSKQYSSSR) are compositionally biased toward low complexity. Residues 1–29 (MSVRYSSSKQYSSSRSGGGGGGGSSLRIS) are disordered. Positions 1 to 126 (MSVRYSSSKQ…FGDGGLISGN (126 aa)) are head. 6 positions are modified to phosphoserine: Ser-14, Ser-16, Ser-34, Ser-45, Ser-48, and Ser-151. The interval 127–162 (QKITMQNLNDRLASYLDKVRALEESNYELEVKIKEW) is coil 1A. The 315-residue stretch at 127 to 441 (QKITMQNLND…SLLEGEGSSG (315 aa)) folds into the IF rod domain. Residues 163-183 (YEKYGNSRQREPRDYSKYYQT) are linker 1. The segment at 184-275 (IDDLKNQIFN…KNHEEEMRDL (92 aa)) is coil 1B. A linker 12 region spans residues 276 to 298 (QNVSTGDVNVEMNAAPGVDLTEL). The segment at 299-437 (LNNMRSQYEQ…QTYRSLLEGE (139 aa)) is coil 2. The interval 438 to 526 (GSSGGGSYGG…GESSSKGPRY (89 aa)) is tail. Residues 458–505 (GGGGYGGGSSSGGYGGGSSSGGGHGGSSGGSYGGGSSSGGGHGGGSSS) are compositionally biased toward gly residues. Residues 458-526 (GGGGYGGGSS…GESSSKGPRY (69 aa)) are disordered. Over residues 506 to 526 (GGHKSTTTGSVGESSSKGPRY) the composition is skewed to low complexity.

This sequence belongs to the intermediate filament family. As to quaternary structure, heterotetramer of two type I and two type II keratins. Heterodimer with KRT1. Two heterodimers of KRT1 and KRT10 form a heterotetramer. The KRT10 subunit in the heterotetramer is probably disulfide-linked.

The protein localises to the secreted. It is found in the extracellular space. Its subcellular location is the cell surface. It localises to the cytoplasm. Functionally, plays a role in the establishment of the epidermal barrier on plantar skin. Involved in the maintenance of cell layer development and keratin filament bundles in suprabasal cells of the epithelium. The sequence is that of Keratin, type I cytoskeletal 10 (KRT10) from Bos taurus (Bovine).